The sequence spans 301 residues: Probable splicing factor ECU05_1440 (301 aa).

In terms of domain architecture, RRM 1 spans 1–70 (MQIFIGKIPN…APISVERANG (70 aa)). 2 disordered regions span residues 106-140 (PPMRYESRSPGRYDPRFSDRYGGRSPEYRGDSFRM) and 255-301 (SKDE…AEND). Composition is skewed to basic and acidic residues over residues 110 to 140 (YESRSPGRYDPRFSDRYGGRSPEYRGDSFRM) and 255 to 270 (SKDEYKSRERESHMRS). In terms of domain architecture, RRM 2 spans 182–255 (LKVVFENIAP…HILKTRSYLS (74 aa)).

Belongs to the splicing factor SR family.

The protein localises to the nucleus. Functionally, plays a role in splicing. The sequence is that of Probable splicing factor ECU05_1440 from Encephalitozoon cuniculi (strain GB-M1) (Microsporidian parasite).